The following is a 211-amino-acid chain: Thiamine-phosphate synthase (211 aa).

Residues 37–41 (QLRIK) and Asn69 each bind 4-amino-2-methyl-5-(diphosphooxymethyl)pyrimidine. Residues Asp70 and Asp89 each contribute to the Mg(2+) site. Ser108 serves as a coordination point for 4-amino-2-methyl-5-(diphosphooxymethyl)pyrimidine. 134 to 136 (TQT) contributes to the 2-[(2R,5Z)-2-carboxy-4-methylthiazol-5(2H)-ylidene]ethyl phosphate binding site. Lys137 contacts 4-amino-2-methyl-5-(diphosphooxymethyl)pyrimidine. Residues Gly166 and 186 to 187 (VS) each bind 2-[(2R,5Z)-2-carboxy-4-methylthiazol-5(2H)-ylidene]ethyl phosphate.

This sequence belongs to the thiamine-phosphate synthase family. Mg(2+) is required as a cofactor.

It catalyses the reaction 2-[(2R,5Z)-2-carboxy-4-methylthiazol-5(2H)-ylidene]ethyl phosphate + 4-amino-2-methyl-5-(diphosphooxymethyl)pyrimidine + 2 H(+) = thiamine phosphate + CO2 + diphosphate. It carries out the reaction 2-(2-carboxy-4-methylthiazol-5-yl)ethyl phosphate + 4-amino-2-methyl-5-(diphosphooxymethyl)pyrimidine + 2 H(+) = thiamine phosphate + CO2 + diphosphate. The catalysed reaction is 4-methyl-5-(2-phosphooxyethyl)-thiazole + 4-amino-2-methyl-5-(diphosphooxymethyl)pyrimidine + H(+) = thiamine phosphate + diphosphate. It functions in the pathway cofactor biosynthesis; thiamine diphosphate biosynthesis; thiamine phosphate from 4-amino-2-methyl-5-diphosphomethylpyrimidine and 4-methyl-5-(2-phosphoethyl)-thiazole: step 1/1. In terms of biological role, condenses 4-methyl-5-(beta-hydroxyethyl)thiazole monophosphate (THZ-P) and 2-methyl-4-amino-5-hydroxymethyl pyrimidine pyrophosphate (HMP-PP) to form thiamine monophosphate (TMP). The chain is Thiamine-phosphate synthase from Escherichia coli O157:H7.